Here is a 118-residue protein sequence, read N- to C-terminus: Ribonuclease P protein component (118 aa).

This sequence belongs to the RnpA family. In terms of assembly, consists of a catalytic RNA component (M1 or rnpB) and a protein subunit.

The catalysed reaction is Endonucleolytic cleavage of RNA, removing 5'-extranucleotides from tRNA precursor.. Its function is as follows. RNaseP catalyzes the removal of the 5'-leader sequence from pre-tRNA to produce the mature 5'-terminus. It can also cleave other RNA substrates such as 4.5S RNA. The protein component plays an auxiliary but essential role in vivo by binding to the 5'-leader sequence and broadening the substrate specificity of the ribozyme. The chain is Ribonuclease P protein component from Rickettsia typhi (strain ATCC VR-144 / Wilmington).